Here is a 199-residue protein sequence, read N- to C-terminus: Large ribosomal subunit protein bL25 (199 aa).

Belongs to the bacterial ribosomal protein bL25 family. CTC subfamily. As to quaternary structure, part of the 50S ribosomal subunit; part of the 5S rRNA/L5/L18/L25 subcomplex. Contacts the 5S rRNA. Binds to the 5S rRNA independently of L5 and L18.

In terms of biological role, this is one of the proteins that binds to the 5S RNA in the ribosome where it forms part of the central protuberance. This Pelobacter propionicus (strain DSM 2379 / NBRC 103807 / OttBd1) protein is Large ribosomal subunit protein bL25.